The following is a 200-amino-acid chain: Recombination protein RecR (200 aa).

The C4-type zinc-finger motif lies at 58-73; the sequence is CSLCCNLTDEDPCSIC. A Toprim domain is found at 81 to 176; sequence NLLCVVEEPR…KVTRIAHGIP (96 aa).

This sequence belongs to the RecR family.

Its function is as follows. May play a role in DNA repair. It seems to be involved in an RecBC-independent recombinational process of DNA repair. It may act with RecF and RecO. This chain is Recombination protein RecR, found in Desulforamulus reducens (strain ATCC BAA-1160 / DSM 100696 / MI-1) (Desulfotomaculum reducens).